The primary structure comprises 423 residues: Progestin and adipoQ receptor-like protein 1 (423 aa).

At 1-201 (MDPDEVNQAL…KSIWSLHTET (201 aa)) the chain is on the cytoplasmic side. Residues 54 to 140 (VVSPTNSDDE…DEDELEVDVK (87 aa)) are disordered. The segment covering 60-69 (SDDEEGEFCS) has biased composition (acidic residues). Residues 104–114 (TVLRYRRKKGG) show a composition bias toward basic residues. The chain crosses the membrane as a helical span at residues 202 to 222 (GNIWTHLIGCVAFFLLACWFL). Residues 223–234 (TRPDNHIQFQEK) are Extracellular-facing. The helical transmembrane segment at 235–252 (VVFSFFFAGAVSVSDSRS) threads the bilayer. At 253 to 288 (PSTPSRVIRSTSSRYSANSTIWESRCSLSARLFQPK) the chain is on the cytoplasmic side. Residues 289 to 309 (ITYIAMVCVLGIGAIVVSLWD) traverse the membrane as a helical segment. Over 310-320 (KFSESKYRPVR) the chain is Extracellular. The chain crosses the membrane as a helical span at residues 321–341 (AAVFVGMGCSGVIPTIHYIIT). The Cytoplasmic segment spans residues 342–351 (DGVHSLFADN). The chain crosses the membrane as a helical span at residues 352 to 372 (SFHWLLLMAFLYLLGAALYAT). The Extracellular segment spans residues 373 to 392 (RTPERFFPGKCDIWFQSHQL). The chain crosses the membrane as a helical span at residues 393–413 (FHTCVVIAAFVHYYGISEMAF). Residues 414–423 (ARLNEQCPVR) lie on the Cytoplasmic side of the membrane.

It belongs to the ADIPOR family.

Its subcellular location is the membrane. Functionally, probable receptor, which may be involved in metabolic pathways that regulate lipid metabolism such as fatty acid oxidation. In Caenorhabditis briggsae, this protein is Progestin and adipoQ receptor-like protein 1.